The following is a 481-amino-acid chain: Serine/threonine-protein kinase US3 (481 aa).

Positions 12–63 (RPDKRQEASVPPETNTAPAFPASTFYTPAEDAYLAPGPPETIHPSRPPSPGE) are disordered. A compositionally biased stretch (pro residues) spans 47–61 (PGPPETIHPSRPPSP). The Protein kinase domain occupies 191–478 (FAIHGALIPG…AAELLRLPLF (288 aa)). Residues 197–205 (LIPGSEGCV) and lysine 220 contribute to the ATP site. Residue aspartate 305 is the Proton acceptor of the active site.

This sequence belongs to the protein kinase superfamily. Ser/Thr protein kinase family. In terms of assembly, interacts with host LAT; this interaction prevents LAT activation of TRAF6. In terms of processing, phosphorylated by UL13; this phosphorylation regulates subsequent phosphorylation of UL31 and UL34 by US3. Autophosphorylated.

It is found in the host cytoplasm. The protein resides in the host nucleus. The enzyme catalyses L-seryl-[protein] + ATP = O-phospho-L-seryl-[protein] + ADP + H(+). It carries out the reaction L-threonyl-[protein] + ATP = O-phospho-L-threonyl-[protein] + ADP + H(+). Its function is as follows. Multifunctional serine/threonine kinase that plays a role in several processes including egress of virus particles from the nucleus, modulation of the actin cytoskeleton and inhibition of host immune response. Phosphorylates UL31 and UL34, two critical regulators of capsid budding from nucleus to endoplasmic reticulum, thereby facilitating virion egress. Modulates and redistributes host components of the nuclear envelope, including LMNA, emerin/EMD and the nuclear matrix protein MATR3. In turn, facilitates nuclear pore impairment and capsid release through impaired nuclear envelope. Phosphorylates envelope glycoprotein B (gB), probably to direct it to the cell surface. Promotes virus intracellular spread by restructuring host cell cytoskeleton. Blocks host apoptosis to extend cell survival and allow efficient viral replication. Promotes viral gene expression by phosphorylating host HDAC2 to reduce viral genome silencing. Strongly inhibits TCR-activated signal transduction in T-cells by reducing the ubiquitination of LAT and TRAF6, leading to a suboptimal activation of LAT. Subverts host antiviral innate immunity by inhibiting type I interferon production through hyperphosphorylation of beta-catenin/CTNNB1. In addition, phosphorylates the RNA sensor RIGI and the transcription factor IRF3 to prevent the RLR-mediated antiviral signaling pathway. Hyperphosphorylates host RELA and thereby dampens NF-kappa-B signaling. Acts as an immunoevasin partly responsible for inhibition of MR1 expression and antigen presentation in response to bacterial infection. This Human herpesvirus 2 (strain HG52) (HHV-2) protein is Serine/threonine-protein kinase US3 (US3).